We begin with the raw amino-acid sequence, 408 residues long: Na(+)-translocating NADH-quinone reductase subunit F (408 aa).

The chain crosses the membrane as a helical span at residues 4 to 24; that stretch reads IYLGVGMFIAIVLALVLIIMF. In terms of domain architecture, 2Fe-2S ferredoxin-type spans 33–127; the sequence is GEVTISINGD…DMDIELPEEI (95 aa). 4 residues coordinate [2Fe-2S] cluster: Cys70, Cys76, Cys79, and Cys111. The FAD-binding FR-type domain maps to 130–270; that stretch reads IKKWDCEVIS…SGPFGEFFAK (141 aa).

The protein belongs to the NqrF family. As to quaternary structure, composed of six subunits; NqrA, NqrB, NqrC, NqrD, NqrE and NqrF. [2Fe-2S] cluster is required as a cofactor. The cofactor is FAD.

It is found in the cell inner membrane. It carries out the reaction a ubiquinone + n Na(+)(in) + NADH + H(+) = a ubiquinol + n Na(+)(out) + NAD(+). In terms of biological role, NQR complex catalyzes the reduction of ubiquinone-1 to ubiquinol by two successive reactions, coupled with the transport of Na(+) ions from the cytoplasm to the periplasm. The first step is catalyzed by NqrF, which accepts electrons from NADH and reduces ubiquinone-1 to ubisemiquinone by a one-electron transfer pathway. This chain is Na(+)-translocating NADH-quinone reductase subunit F, found in Pseudoalteromonas atlantica (strain T6c / ATCC BAA-1087).